The primary structure comprises 187 residues: uncharacterized protein (187 aa).

Positions 53 to 187 constitute a Tyr recombinase domain; that stretch reads RKPHIYSPAD…CLQTSYVVPG (135 aa). Catalysis depends on residues Arg-98 and Lys-123.

Belongs to the 'phage' integrase family.

This is an uncharacterized protein from Sinorhizobium fredii (strain NBRC 101917 / NGR234).